A 552-amino-acid chain; its full sequence is Putative transport protein YPTS_4123 (552 aa).

Helical transmembrane passes span 1 to 21, 26 to 46, 65 to 85, 96 to 116, 119 to 139, and 158 to 178; these read MSAI…GLWI, IYGV…VGHF, FGLI…FFSS, FAIL…KLFA, LPII…LGAA, and MGYA…MWLI. RCK C-terminal domains follow at residues 192–276 and 279–361; these read AFDS…VVGE and DVTL…IVGN. 6 consecutive transmembrane segments (helical) span residues 371–391, 393–413, 439–459, 464–484, 493–513, and 530–550; these read MLPV…PLFV, GFPA…ALIL, IVLF…NTLV, LAWI…VGIL, YLTL…LAFA, and VYPL…VLFW.

This sequence belongs to the AAE transporter (TC 2.A.81) family. YidE subfamily.

It is found in the cell membrane. The polypeptide is Putative transport protein YPTS_4123 (Yersinia pseudotuberculosis serotype IB (strain PB1/+)).